A 501-amino-acid polypeptide reads, in one-letter code: Lysine--tRNA ligase (501 aa).

Residues Glu402 and Glu409 each contribute to the Mg(2+) site.

The protein belongs to the class-II aminoacyl-tRNA synthetase family. In terms of assembly, homodimer. The cofactor is Mg(2+).

It is found in the cytoplasm. The catalysed reaction is tRNA(Lys) + L-lysine + ATP = L-lysyl-tRNA(Lys) + AMP + diphosphate. This Helicobacter pylori (strain J99 / ATCC 700824) (Campylobacter pylori J99) protein is Lysine--tRNA ligase (lysS).